The primary structure comprises 1359 residues: Junctional cadherin 5-associated protein (1359 aa).

9 disordered regions span residues 1–147 (MYSV…SLPV), 249–411 (PLNE…PAHP), 454–554 (NSSP…TCET), 591–813 (SHLP…CNSK), 840–1076 (KELQ…TIEI), 1105–1141 (RAGQNQPAEPDASACTPESPQEELLSRPAPADVPRVS), 1157–1207 (PLFV…KDVE), 1225–1260 (SVAGSEKRLRSPSKVIESLQEKLASPPRRADPDRLM), and 1276–1359 (FRNA…VERV). Residues 15-28 (LSRDPPASREDNPK) are compositionally biased toward basic and acidic residues. 2 stretches are compositionally biased toward polar residues: residues 82 to 91 (PQSTSASRTS) and 98 to 112 (QPPSAWSSHPPTGND). The segment covering 120 to 135 (RQEARSQKPREHENLE) has biased composition (basic and acidic residues). Low complexity predominate over residues 302–321 (QQSRGGADSSDSQDSQQMDA). Residues 335-353 (LEPPVYVPPPSYRSPPQNI) show a composition bias toward pro residues. The span at 539–554 (RQVSSPYSQGESTCET) shows a compositional bias: polar residues. Basic and acidic residues predominate over residues 591–613 (SHLPDRDMDNNDLKPSADQKNGS). Composition is skewed to polar residues over residues 619-632 (LQEQSLLSMSSTDL), 689-704 (QQTQTSFSEEPQSSQL), and 756-773 (LSPSSNSAFSRTSLSVDQ). A compositionally biased stretch (low complexity) spans 849–859 (SSSSSSSSSSS). Basic and acidic residues predominate over residues 868-880 (QENRAHCRQEDVG). Polar residues predominate over residues 1003-1013 (PKITSAFSSVK). Serine 1044 and serine 1050 each carry phosphoserine. The residue at position 1194 (serine 1194) is a Phosphoserine. The residue at position 1281 (serine 1281) is a Phosphoserine. Over residues 1324 to 1342 (SISREEKEHPAAQKEKSMD) the composition is skewed to basic and acidic residues.

It localises to the cell junction. Its subcellular location is the adherens junction. The sequence is that of Junctional cadherin 5-associated protein from Homo sapiens (Human).